A 153-amino-acid chain; its full sequence is Endoribonuclease YbeY (153 aa).

Positions 113, 117, and 123 each coordinate Zn(2+).

It belongs to the endoribonuclease YbeY family. Zn(2+) serves as cofactor.

It is found in the cytoplasm. Functionally, single strand-specific metallo-endoribonuclease involved in late-stage 70S ribosome quality control and in maturation of the 3' terminus of the 16S rRNA. The protein is Endoribonuclease YbeY of Aliivibrio salmonicida (strain LFI1238) (Vibrio salmonicida (strain LFI1238)).